A 301-amino-acid polypeptide reads, in one-letter code: Glycine--tRNA ligase alpha subunit (301 aa).

Belongs to the class-II aminoacyl-tRNA synthetase family. Tetramer of two alpha and two beta subunits.

Its subcellular location is the cytoplasm. It carries out the reaction tRNA(Gly) + glycine + ATP = glycyl-tRNA(Gly) + AMP + diphosphate. This is Glycine--tRNA ligase alpha subunit from Shewanella baltica (strain OS223).